We begin with the raw amino-acid sequence, 144 residues long: Probable transcription termination protein NusA (144 aa).

Residues 101-144 (RTDIVVGVKPEEIGKVIGKEGKNIKLFKDAVSRYFNVNSISVKQ) enclose the KH domain.

The protein belongs to the NusA family.

It localises to the cytoplasm. Participates in transcription termination. In Thermoplasma acidophilum (strain ATCC 25905 / DSM 1728 / JCM 9062 / NBRC 15155 / AMRC-C165), this protein is Probable transcription termination protein NusA.